A 198-amino-acid chain; its full sequence is Cyclotides mra4/mra5 (198 aa).

The first 22 residues, 1-22 (MESNKMVVGVLLIAAFALPALA), serve as a signal peptide directing secretion. Positions 23 to 79 (LFERDVITHETIEAVLKKSTPNSNTMLQEDAINALTGKTLISQTILEETLLKNGVVG) are excised as a propeptide. 3 cysteine pairs are disulfide-bonded: Cys-84/Cys-100, Cys-88/Cys-102, and Cys-93/Cys-107. Positions 111-163 (SLALPTLEKDVITPEALEAVLKSNGGAIVNTKTIISNAIFEETLLNNANHVLG) are excised as a propeptide. 3 disulfides stabilise this stretch: Cys-167-Cys-183, Cys-171-Cys-185, and Cys-176-Cys-190. The propeptide occupies 194-198 (SLALN).

The protein belongs to the cyclotide family. Bracelet subfamily. In terms of processing, these are cyclic peptides. The mature peptides contain 3 disulfide bonds each.

Probably participates in a plant defense mechanism. The sequence is that of Cyclotides mra4/mra5 from Melicytus ramiflorus (Whitey wood).